Reading from the N-terminus, the 184-residue chain is Endoribonuclease YbeY (184 aa).

2 stretches are compositionally biased toward acidic residues: residues 1-11 (MTVEVGADENP) and 19-29 (DGAGDESDDED). Residues 1-38 (MTVEVGADENPDFAHDETDGAGDESDDEDAQGRDPELD) are disordered. Positions 146, 150, and 156 each coordinate Zn(2+).

It belongs to the endoribonuclease YbeY family. Zn(2+) is required as a cofactor.

It is found in the cytoplasm. In terms of biological role, single strand-specific metallo-endoribonuclease involved in late-stage 70S ribosome quality control and in maturation of the 3' terminus of the 16S rRNA. The sequence is that of Endoribonuclease YbeY from Burkholderia pseudomallei (strain K96243).